Reading from the N-terminus, the 23-residue chain is Aurein-4.1 (23 aa).

This sequence belongs to the frog skin active peptide (FSAP) family. Aurein subfamily. Expressed by the skin dorsal glands.

It localises to the secreted. Functionally, has no antimicrobial or anticancer activity. This is Aurein-4.1 from Ranoidea aurea (Green and golden bell frog).